The chain runs to 213 residues: ATP phosphoribosyltransferase (213 aa).

Belongs to the ATP phosphoribosyltransferase family. Short subfamily. As to quaternary structure, heteromultimer composed of HisG and HisZ subunits.

It is found in the cytoplasm. The enzyme catalyses 1-(5-phospho-beta-D-ribosyl)-ATP + diphosphate = 5-phospho-alpha-D-ribose 1-diphosphate + ATP. It functions in the pathway amino-acid biosynthesis; L-histidine biosynthesis; L-histidine from 5-phospho-alpha-D-ribose 1-diphosphate: step 1/9. Catalyzes the condensation of ATP and 5-phosphoribose 1-diphosphate to form N'-(5'-phosphoribosyl)-ATP (PR-ATP). Has a crucial role in the pathway because the rate of histidine biosynthesis seems to be controlled primarily by regulation of HisG enzymatic activity. This Teredinibacter turnerae (strain ATCC 39867 / T7901) protein is ATP phosphoribosyltransferase.